A 373-amino-acid polypeptide reads, in one-letter code: MAKKDYYEILGVSRNATQEEIRQAYKKLIKKWHPDRNYENKKLAEEKFKEIQEAYEVLSDPEKRAMYDKFGYVGDVPPNAGGGFRGFGGFEDIFKDFGDFINNDIFNIFFGDQRTSSRKRTKTPRKGEDINISVDVSFEELFTGVKIPLEYDRYEVCEHCHGEGVEPGSGWVTCPKCHGTGTVREERRTFLGVIVNQYTCNQCGGTGKIPGESCRVCGGTGRIRKRHRIEVNIPAGVENGTILRIQGGGHAGYYGGGYGDLYVHVRVVGYTSFERKGNNLIKDLKIDYVDAILGTKVKIKMPDGKIKEVKIPSGVQHGQEIYVYGEGIPDMRTGRRGDLILRINVGIPTKVSRTEKKLLKEIAKLRGKDVRED.

The 67-residue stretch at 5–71 (DYYEILGVSR…EKRAMYDKFG (67 aa)) folds into the J domain. The segment at 144-226 (GVKIPLEYDR…CGGTGRIRKR (83 aa)) adopts a CR-type zinc-finger fold. Zn(2+) is bound by residues Cys-157, Cys-160, Cys-174, Cys-177, Cys-200, Cys-203, Cys-214, and Cys-217. CXXCXGXG motif repeat units follow at residues 157 to 164 (CEHCHGEG), 174 to 181 (CPKCHGTG), 200 to 207 (CNQCGGTG), and 214 to 221 (CRVCGGTG).

The protein belongs to the DnaJ family. As to quaternary structure, homodimer. Zn(2+) serves as cofactor.

The protein localises to the cytoplasm. Its function is as follows. Participates actively in the response to hyperosmotic and heat shock by preventing the aggregation of stress-denatured proteins and by disaggregating proteins, also in an autonomous, DnaK-independent fashion. Unfolded proteins bind initially to DnaJ; upon interaction with the DnaJ-bound protein, DnaK hydrolyzes its bound ATP, resulting in the formation of a stable complex. GrpE releases ADP from DnaK; ATP binding to DnaK triggers the release of the substrate protein, thus completing the reaction cycle. Several rounds of ATP-dependent interactions between DnaJ, DnaK and GrpE are required for fully efficient folding. Also involved, together with DnaK and GrpE, in the DNA replication of plasmids through activation of initiation proteins. This Thermosipho melanesiensis (strain DSM 12029 / CIP 104789 / BI429) protein is Chaperone protein DnaJ.